Here is a 468-residue protein sequence, read N- to C-terminus: 3-isopropylmalate dehydratase large subunit (468 aa).

The [4Fe-4S] cluster site is built by cysteine 347, cysteine 407, and cysteine 410.

Belongs to the aconitase/IPM isomerase family. LeuC type 1 subfamily. As to quaternary structure, heterodimer of LeuC and LeuD. Requires [4Fe-4S] cluster as cofactor.

The enzyme catalyses (2R,3S)-3-isopropylmalate = (2S)-2-isopropylmalate. It functions in the pathway amino-acid biosynthesis; L-leucine biosynthesis; L-leucine from 3-methyl-2-oxobutanoate: step 2/4. Its function is as follows. Catalyzes the isomerization between 2-isopropylmalate and 3-isopropylmalate, via the formation of 2-isopropylmaleate. In Campylobacter jejuni (strain RM1221), this protein is 3-isopropylmalate dehydratase large subunit.